Consider the following 317-residue polypeptide: Tyrosine--tRNA ligase (317 aa).

Tyr-33 contributes to the L-tyrosine binding site. Residues 38–46 (PSGKIHMGH) carry the 'HIGH' region motif. L-tyrosine is bound by residues Tyr-155, Gln-159, Asp-162, and Gln-177. Positions 211 to 215 (KMSSS) match the 'KMSKS' region motif. Position 214 (Ser-214) interacts with ATP.

This sequence belongs to the class-I aminoacyl-tRNA synthetase family. TyrS type 3 subfamily. In terms of assembly, homodimer.

Its subcellular location is the cytoplasm. The enzyme catalyses tRNA(Tyr) + L-tyrosine + ATP = L-tyrosyl-tRNA(Tyr) + AMP + diphosphate + H(+). In terms of biological role, catalyzes the attachment of tyrosine to tRNA(Tyr) in a two-step reaction: tyrosine is first activated by ATP to form Tyr-AMP and then transferred to the acceptor end of tRNA(Tyr). The polypeptide is Tyrosine--tRNA ligase (Methanococcoides burtonii (strain DSM 6242 / NBRC 107633 / OCM 468 / ACE-M)).